Reading from the N-terminus, the 1143-residue chain is cGMP-specific 3',5'-cyclic phosphodiesterase (1143 aa).

Low complexity-rich tracts occupy residues 1–19 and 31–45; these read MHGP…DVSS and TTSS…ASSS. The segment at 1–167 is disordered; that stretch reads MHGPVSRSSS…KASTTASQQD (167 aa). Positions 46 to 59 are enriched in polar residues; it reads KPLTNGANKTTIST. The segment covering 75 to 84 has biased composition (low complexity); the sequence is GAIPASSSSG. Over residues 96–107 the composition is skewed to polar residues; the sequence is SNNNRPAATNRS. The segment covering 131-153 has biased composition (low complexity); sequence SSSSPSQSPSQTQASIQTQTSQQ. 2 consecutive GAF domains span residues 272-424 and 456-637; these read DIDV…GIGI and NLEC…GLGI. A PDEase domain is found at 667 to 990; that stretch reads SQDQTEKLTQ…RNWQDLAEKV (324 aa). His-743 serves as the catalytic Proton donor. 4 residues coordinate a divalent metal cation: His-747, His-783, Asp-784, and Asp-894. Disordered regions lie at residues 1031-1060 and 1090-1143; these read QQSQ…TGAL and SHVS…CALL. 2 stretches are compositionally biased toward basic and acidic residues: residues 1036–1047 and 1090–1100; these read GSEDSHTPEHQR and SHVSEDMDDKS. The segment covering 1109 to 1127 has biased composition (low complexity); sequence ASGSMGRMSASSSTSSTGG. Residues 1133–1143 are compositionally biased toward basic residues; sequence SKKRSKLCALL. Residue Cys-1140 is modified to Cysteine methyl ester. The S-farnesyl cysteine moiety is linked to residue Cys-1140. The propeptide at 1141 to 1143 is removed in mature form; sequence ALL.

The protein belongs to the cyclic nucleotide phosphodiesterase family. In terms of assembly, interacts with PrBP. The cofactor is a divalent metal cation.

It is found in the cell membrane. It carries out the reaction 3',5'-cyclic GMP + H2O = GMP + H(+). Its function is as follows. Has a role regulating cGMP transport in Malpighian tubule principal cells. This Drosophila simulans (Fruit fly) protein is cGMP-specific 3',5'-cyclic phosphodiesterase.